The following is a 374-amino-acid chain: Peptide chain release factor 2 (374 aa).

Q252 carries the N5-methylglutamine modification.

Belongs to the prokaryotic/mitochondrial release factor family. In terms of processing, methylated by PrmC. Methylation increases the termination efficiency of RF2.

The protein localises to the cytoplasm. Peptide chain release factor 2 directs the termination of translation in response to the peptide chain termination codons UGA and UAA. This Stenotrophomonas maltophilia (strain R551-3) protein is Peptide chain release factor 2.